Here is a 138-residue protein sequence, read N- to C-terminus: MLKEFKQFALKGNMVDLAVGVIIGSAFGGLVNSVVNDIFMPIIGLITGGIDFSNMFIQLAGDKKATLLAAKEAGATLSYGNFITLLINFLIISWILFFLVKGMNKMTQKQEEVEKPKEMSPEGKLLTEIRDLLAAQKE.

Transmembrane regions (helical) follow at residues V15–V35, I38–Q58, and G80–V100.

It belongs to the MscL family. Homopentamer.

The protein resides in the cell inner membrane. Its function is as follows. Channel that opens in response to stretch forces in the membrane lipid bilayer. May participate in the regulation of osmotic pressure changes within the cell. This is Large-conductance mechanosensitive channel from Bartonella bacilliformis (strain ATCC 35685 / KC583 / Herrer 020/F12,63).